The sequence spans 410 residues: Lissencephaly-1 homolog A (410 aa).

Positions 7–39 (QRDELNRAIADYLRSNGYEEAYSTFKKEAELDM) constitute a LisH domain. Residues 56–82 (TSVIRLQKKVMELESKLNEAKEEITLG) adopt a coiled-coil conformation. 7 WD repeats span residues 106–147 (GHRS…RTLK), 148–187 (GHTD…CIRT), 190–229 (GHDH…CVKT), 232–271 (GHRE…CKAE), 274–333 (EHEH…CLMT), 336–375 (GHDN…CMKT), and 378–410 (AHEH…WECR).

This sequence belongs to the WD repeat LIS1/nudF family. Can self-associate. Component of the cytosolic PAF-AH (I) heterotetrameric enzyme, which is composed of PAFAH1B1 (beta), PAFAH1B2 (alpha2) and PAFAH1B3 (alpha1) subunits. The catalytic activity of the enzyme resides in the alpha1 (PAFAH1B3) and alpha2 (PAFAH1B2) subunits, whereas the beta subunit (PAFAH1B1) has regulatory activity. Trimer formation is not essential for the catalytic activity. Interacts with dynein, dynactin, nde1 and ndel1.

It localises to the cytoplasm. The protein localises to the cytoskeleton. The protein resides in the microtubule organizing center. Its subcellular location is the centrosome. Its function is as follows. Regulatory subunit (beta subunit) of the cytosolic type I platelet-activating factor (PAF) acetylhydrolase (PAF-AH (I)), an enzyme that catalyzes the hydrolyze of the acetyl group at the sn-2 position of PAF and its analogs and participates in PAF inactivation. Regulates the PAF-AH (I) activity in a catalytic dimer composition-dependent manner. Positively regulates the activity of the minus-end directed microtubule motor protein dynein. May enhance dynein-mediated microtubule sliding by targeting dynein to the microtubule plus end. Required for several dynein- and microtubule-dependent processes such as the maintenance of Golgi integrity, the peripheral transport of microtubule fragments and the coupling of the nucleus and centrosome. May be required for proliferation of neuronal precursors and neuronal migration. This is Lissencephaly-1 homolog A (pafah1b1-1) from Salmo salar (Atlantic salmon).